Consider the following 267-residue polypeptide: MFSTGTVWKNVAAVRQRAPIIHSITNFVVMNTTANALLAAGASPIMAHAPEEMAEMAGIASALVLNIGTLTKPWVESMMLAGMAARERRLPVVLDPVGAGASSLRTTTALEILEKVRPAVVRGNGSEILALAGAAGDTRGVDSARTAHEAVDGGRALARRYGAVVVVSGAEDVVTDGDALWLVRGGSPLMPRVTGMGCTATVLVAAHVAVAADVLEGAVTGMAAMSAAGALAARRSQGPGSFQVAFLDVLHSLDLVTVRDEVEVVRA.

Methionine 46 provides a ligand contact to substrate. Positions 122 and 168 each coordinate ATP. Glycine 195 lines the substrate pocket.

It belongs to the Thz kinase family. Requires Mg(2+) as cofactor.

It carries out the reaction 5-(2-hydroxyethyl)-4-methylthiazole + ATP = 4-methyl-5-(2-phosphooxyethyl)-thiazole + ADP + H(+). It participates in cofactor biosynthesis; thiamine diphosphate biosynthesis; 4-methyl-5-(2-phosphoethyl)-thiazole from 5-(2-hydroxyethyl)-4-methylthiazole: step 1/1. Catalyzes the phosphorylation of the hydroxyl group of 4-methyl-5-beta-hydroxyethylthiazole (THZ). This chain is Hydroxyethylthiazole kinase, found in Nitratidesulfovibrio vulgaris (strain ATCC 29579 / DSM 644 / CCUG 34227 / NCIMB 8303 / VKM B-1760 / Hildenborough) (Desulfovibrio vulgaris).